The sequence spans 121 residues: Large ribosomal subunit protein uL18 (121 aa).

The protein belongs to the universal ribosomal protein uL18 family. In terms of assembly, part of the 50S ribosomal subunit; part of the 5S rRNA/L5/L18/L25 subcomplex. Contacts the 5S and 23S rRNAs.

In terms of biological role, this is one of the proteins that bind and probably mediate the attachment of the 5S RNA into the large ribosomal subunit, where it forms part of the central protuberance. The protein is Large ribosomal subunit protein uL18 of Polaromonas naphthalenivorans (strain CJ2).